A 373-amino-acid chain; its full sequence is Leucine aminopeptidase 1 (373 aa).

The first 18 residues, 1–18, serve as a signal peptide directing secretion; it reads MKLLSVLALSATATSVLG. Positions 176 and 195 each coordinate Zn(2+). The N-linked (GlcNAc...) asparagine glycan is linked to asparagine 196. Residues glutamate 234 and aspartate 261 each contribute to the Zn(2+) site. Asparagine 288 carries N-linked (GlcNAc...) asparagine glycosylation. Cysteine 310 and cysteine 314 are oxidised to a cystine. Histidine 343 is a binding site for Zn(2+). A glycan (N-linked (GlcNAc...) asparagine) is linked at asparagine 348.

Belongs to the peptidase M28 family. M28E subfamily. Monomer. The cofactor is Zn(2+).

Its subcellular location is the secreted. Its activity is regulated as follows. Activity is inhibited by EDTA, o-phenanthroline, bestatin and amastatin. Extracellular aminopeptidase which contributes to pathogenicity. This Trichophyton rubrum (Athlete's foot fungus) protein is Leucine aminopeptidase 1 (LAP1).